Reading from the N-terminus, the 322-residue chain is Quinolinate synthase (322 aa).

Iminosuccinate contacts are provided by His-36 and Ser-53. Position 98 (Cys-98) interacts with [4Fe-4S] cluster. Iminosuccinate contacts are provided by residues 124-126 and Ser-141; that span reads YIN. Cys-184 contacts [4Fe-4S] cluster. Residues 210–212 and Thr-227 contribute to the iminosuccinate site; that span reads HPE. Residue Cys-278 coordinates [4Fe-4S] cluster.

The protein belongs to the quinolinate synthase family. Type 2 subfamily. [4Fe-4S] cluster is required as a cofactor.

The protein resides in the cytoplasm. The enzyme catalyses iminosuccinate + dihydroxyacetone phosphate = quinolinate + phosphate + 2 H2O + H(+). Its pathway is cofactor biosynthesis; NAD(+) biosynthesis; quinolinate from iminoaspartate: step 1/1. Catalyzes the condensation of iminoaspartate with dihydroxyacetone phosphate to form quinolinate. The chain is Quinolinate synthase from Chloroherpeton thalassium (strain ATCC 35110 / GB-78).